We begin with the raw amino-acid sequence, 148 residues long: UPF0260 protein Spro_2751 (148 aa).

Belongs to the UPF0260 family.

The chain is UPF0260 protein Spro_2751 from Serratia proteamaculans (strain 568).